Here is a 237-residue protein sequence, read N- to C-terminus: Large ribosomal subunit protein uL1 (237 aa).

It belongs to the universal ribosomal protein uL1 family. Part of the 50S ribosomal subunit.

Binds directly to 23S rRNA. The L1 stalk is quite mobile in the ribosome, and is involved in E site tRNA release. Functionally, protein L1 is also a translational repressor protein, it controls the translation of the L11 operon by binding to its mRNA. This is Large ribosomal subunit protein uL1 from Synechococcus sp. (strain ATCC 27144 / PCC 6301 / SAUG 1402/1) (Anacystis nidulans).